A 479-amino-acid chain; its full sequence is Aldehyde dehydrogenase (479 aa).

190-195 (GSSKVG) contributes to the NAD(+) binding site. The active-site Proton acceptor is glutamate 212. Residue cysteine 247 is the Nucleophile of the active site.

This sequence belongs to the aldehyde dehydrogenase family.

It is found in the plastid. The protein localises to the amyloplast. The protein resides in the chloroplast. It catalyses the reaction an aldehyde + NAD(+) + H2O = a carboxylate + NADH + 2 H(+). Oxidizes nonanal, propionaldehyde and acetaldehyde in vitro, in the following decreasing order of reactivity: nonanal, propionaldehyde, acetaldehyde. The sequence is that of Aldehyde dehydrogenase (ALDH) from Craterostigma plantagineum (Blue gem).